Reading from the N-terminus, the 707-residue chain is Ribosomal RNA large subunit methyltransferase K/L (707 aa).

One can recognise a THUMP domain in the interval 44–155 (VIYNLCLWSR…NDILTVSFDL (112 aa)).

The protein belongs to the methyltransferase superfamily. RlmKL family.

Its subcellular location is the cytoplasm. The enzyme catalyses guanosine(2445) in 23S rRNA + S-adenosyl-L-methionine = N(2)-methylguanosine(2445) in 23S rRNA + S-adenosyl-L-homocysteine + H(+). It carries out the reaction guanosine(2069) in 23S rRNA + S-adenosyl-L-methionine = N(2)-methylguanosine(2069) in 23S rRNA + S-adenosyl-L-homocysteine + H(+). Functionally, specifically methylates the guanine in position 2445 (m2G2445) and the guanine in position 2069 (m7G2069) of 23S rRNA. The polypeptide is Ribosomal RNA large subunit methyltransferase K/L (Legionella pneumophila (strain Lens)).